A 215-amino-acid chain; its full sequence is MKIKYMGHSAFIIEHKNRLIIDPYIETIPEVDYVLVTHAHNDHFGNTIEIAKKNNAKVISIYEIAEFVKQFNIESIGMNFGGTIDIGEKVSLVPAVHSSTLYYNGKAYPLGNPGGFVIKGNKTIYHAGDTMVFKDMELIGELFKIDVALLPIGGVFTMDIDQALKAIDLLKPKIVIPMHYNTWPIIKADPYEFKRKAEEKGVEAIVLNKDEEIDL.

The protein belongs to the UPF0173 family.

The chain is UPF0173 metal-dependent hydrolase NEQ378 from Nanoarchaeum equitans (strain Kin4-M).